Consider the following 192-residue polypeptide: UPF0149 protein YPO0911/y3298/YP_3608 (192 aa).

Belongs to the UPF0149 family.

This chain is UPF0149 protein YPO0911/y3298/YP_3608, found in Yersinia pestis.